The following is a 307-amino-acid chain: Malate dehydrogenase (307 aa).

NAD(+) is bound by residues Gly8–Gly13 and Asp32. Substrate-binding residues include Arg81 and Arg87. Residues Asn94 and Val117 to Asn119 each bind NAD(+). Residues Asn119 and Arg150 each coordinate substrate. His174 (proton acceptor) is an active-site residue.

This sequence belongs to the LDH/MDH superfamily. MDH type 3 family.

The catalysed reaction is (S)-malate + NAD(+) = oxaloacetate + NADH + H(+). Its function is as follows. Catalyzes the reversible oxidation of malate to oxaloacetate. The sequence is that of Malate dehydrogenase from Dehalococcoides mccartyi (strain ATCC BAA-2100 / JCM 16839 / KCTC 5957 / BAV1).